The following is a 677-amino-acid chain: NADPH--cytochrome P450 reductase (677 aa).

The residue at position 2 (glycine 2) is an N-acetylglycine. Residues 2-21 lie on the Lumenal side of the membrane; it reads GDSHVDTSSTVSEAVAEEVS. A helical transmembrane segment spans residues 22 to 42; that stretch reads LFSMTDMILFSLIVGLLTYWF. The Cytoplasmic portion of the chain corresponds to 43-677; sequence LFRKKKEEVP…KGRYSLDVWS (635 aa). At serine 63 the chain carries Phosphoserine. The Flavodoxin-like domain occupies 80-224; sequence IIVFYGSQTG…DFITWREQFW (145 aa). FMN is bound by residues 86 to 91, 138 to 141, 173 to 182, and aspartate 208; these read SQTGTA, ATYG, and LGNKTYEHFN. Residues 279–521 form the FAD-binding FR-type domain; that stretch reads KNPFLAAVTT…FVRKSQFRLP (243 aa). Arginine 298 contacts NADP(+). FAD contacts are provided by residues arginine 424, 454-457, 472-474, tyrosine 478, and 488-491; these read RYYS, CAV, and GVAT. NADP(+)-binding positions include threonine 535, 596–597, 602–606, and aspartate 638; these read SR and KVYVQ. Position 676 (tryptophan 676) interacts with FAD.

Belongs to the NADPH--cytochrome P450 reductase family. It in the N-terminal section; belongs to the flavodoxin family. The protein in the C-terminal section; belongs to the flavoprotein pyridine nucleotide cytochrome reductase family. FAD is required as a cofactor. FMN serves as cofactor.

The protein localises to the endoplasmic reticulum membrane. The enzyme catalyses 2 oxidized [cytochrome P450] + NADPH = 2 reduced [cytochrome P450] + NADP(+) + H(+). Functionally, this enzyme is required for electron transfer from NADP to cytochrome P450 in microsomes. It can also provide electron transfer to heme oxygenase and cytochrome B5. The polypeptide is NADPH--cytochrome P450 reductase (Homo sapiens (Human)).